Here is a 425-residue protein sequence, read N- to C-terminus: Interferon-activable protein 211 (425 aa).

A Pyrin domain is found at 1–88; sequence MVNEYKRIVL…AEILKKERSE (88 aa). Positions 86 to 99 are enriched in basic and acidic residues; it reads RSEVTGETSLEKNG. Residues 86–223 are disordered; it reads RSEVTGETSL…QNQNIPRGAV (138 aa). The segment covering 122-153 has biased composition (low complexity); that stretch reads TSATQEETSTAQAGTSTAQAGTSTAQAGTSTA. A run of 4 repeats spans residues 129 to 135, 136 to 142, 143 to 149, and 150 to 156. The segment at 129–177 is 4 X 7 AA tandem repeats of T-S-T-A-Q-A-[GR]; it reads TSTAQAGTSTAQAGTSTAQAGTSTAQKRKSMREEETGVKKSKAAKEPDQ. The segment covering 159-176 has biased composition (basic and acidic residues); it reads MREEETGVKKSKAAKEPD. Over residues 190–206 the composition is skewed to low complexity; that stretch reads SPILHSSSSASSNILSA. The segment covering 207 to 218 has biased composition (polar residues); that stretch reads KNQKSQPQNQNI. Residues 213-413 form the HIN-200 domain; sequence PQNQNIPRGA…CGDHSFVKVT (201 aa).

The protein belongs to the HIN-200 family. In terms of assembly, interacts with HOXB2. Mononuclear phagocytes.

The protein resides in the nucleus. Inhibits cell growth via p53/TP53 and RB1-dependent and independent pathways. May work in synergy with TP53 to promote the transcription of CDKN1A/P21. The polypeptide is Interferon-activable protein 211 (Mus musculus (Mouse)).